A 129-amino-acid chain; its full sequence is 4-amino-4-deoxychorismate mutase (129 aa).

The Chorismate mutase domain maps to 16 to 107; it reads AAATDPLDAL…ETCRLEDEWI (92 aa).

It carries out the reaction 4-amino-4-deoxychorismate = 4-amino-4-deoxyprephenate. It participates in antibiotic biosynthesis. Involved in pristinamycin I biosynthesis. Probably catalyzes the conversion of 4-amino-4-deoxychorismate to 4-amino-4-deoxyprephenate. The polypeptide is 4-amino-4-deoxychorismate mutase (Streptomyces pristinaespiralis).